Here is a 196-residue protein sequence, read N- to C-terminus: MILPIVGYGDPVLRKVGTAITPDYPNLKETIANMYETMYNAYGVGLAAPQVGLPIRIFVIDTTPFSDDEDLPADEQKDLKGFKRTFINAKIVKEEGEEWSFNEGCLSIPDVREDVYRKPTVTIEYCEEDFVMKTEVFDGLIARVIQHEYDHIEGVLFTDKISSLKKRLIQKKLKNITEGKTFQEYRMKFAAAKKGR.

Fe cation contacts are provided by C105 and H147. E148 is a catalytic residue. H151 contacts Fe cation.

It belongs to the polypeptide deformylase family. Fe(2+) is required as a cofactor.

The enzyme catalyses N-terminal N-formyl-L-methionyl-[peptide] + H2O = N-terminal L-methionyl-[peptide] + formate. Functionally, removes the formyl group from the N-terminal Met of newly synthesized proteins. Requires at least a dipeptide for an efficient rate of reaction. N-terminal L-methionine is a prerequisite for activity but the enzyme has broad specificity at other positions. This is Peptide deformylase from Flavobacterium johnsoniae (strain ATCC 17061 / DSM 2064 / JCM 8514 / BCRC 14874 / CCUG 350202 / NBRC 14942 / NCIMB 11054 / UW101) (Cytophaga johnsonae).